Here is a 273-residue protein sequence, read N- to C-terminus: Phosphonates import ATP-binding protein PhnC (273 aa).

The ABC transporter domain maps to 2–245; the sequence is LRIDKLTKRF…VAREIYGADA (244 aa). Residue 34–41 coordinates ATP; that stretch reads GRSGAGKS.

It belongs to the ABC transporter superfamily. Phosphonates importer (TC 3.A.1.9.1) family. In terms of assembly, the complex is composed of two ATP-binding proteins (PhnC), two transmembrane proteins (PhnE) and a solute-binding protein (PhnD).

The protein localises to the cell inner membrane. It carries out the reaction phosphonate(out) + ATP + H2O = phosphonate(in) + ADP + phosphate + H(+). Functionally, part of the ABC transporter complex PhnCDE involved in phosphonates import. Responsible for energy coupling to the transport system. The protein is Phosphonates import ATP-binding protein PhnC of Ruegeria pomeroyi (strain ATCC 700808 / DSM 15171 / DSS-3) (Silicibacter pomeroyi).